The chain runs to 252 residues: Trans-aconitate 2-methyltransferase (252 aa).

The protein belongs to the methyltransferase superfamily. Tam family.

It is found in the cytoplasm. It carries out the reaction trans-aconitate + S-adenosyl-L-methionine = (E)-3-(methoxycarbonyl)pent-2-enedioate + S-adenosyl-L-homocysteine. Catalyzes the S-adenosylmethionine monomethyl esterification of trans-aconitate. This is Trans-aconitate 2-methyltransferase from Shigella flexneri serotype 5b (strain 8401).